A 255-amino-acid chain; its full sequence is Type III pantothenate kinase (255 aa).

ATP is bound at residue 7 to 14 (DVGNTRLK). Substrate contacts are provided by residues Y96 and 103–106 (GADR). Residue D105 is the Proton acceptor of the active site. Residue T133 coordinates ATP. Residue T183 coordinates substrate.

Belongs to the type III pantothenate kinase family. As to quaternary structure, homodimer. The cofactor is NH4(+). K(+) is required as a cofactor.

The protein resides in the cytoplasm. It catalyses the reaction (R)-pantothenate + ATP = (R)-4'-phosphopantothenate + ADP + H(+). It functions in the pathway cofactor biosynthesis; coenzyme A biosynthesis; CoA from (R)-pantothenate: step 1/5. Functionally, catalyzes the phosphorylation of pantothenate (Pan), the first step in CoA biosynthesis. This is Type III pantothenate kinase from Polaromonas sp. (strain JS666 / ATCC BAA-500).